The primary structure comprises 118 residues: Large ribosomal subunit protein bL20 (118 aa).

This sequence belongs to the bacterial ribosomal protein bL20 family.

Binds directly to 23S ribosomal RNA and is necessary for the in vitro assembly process of the 50S ribosomal subunit. It is not involved in the protein synthesizing functions of that subunit. The sequence is that of Large ribosomal subunit protein bL20 from Shigella flexneri serotype 5b (strain 8401).